A 344-amino-acid polypeptide reads, in one-letter code: Methionine import ATP-binding protein MetN 1 (344 aa).

The 240-residue stretch at 2–241 (IEIRNLSQRF…PHHEVTRALI (240 aa)) folds into the ABC transporter domain. 38-45 (GRSGAGKS) is an ATP binding site.

Belongs to the ABC transporter superfamily. Methionine importer (TC 3.A.1.24) family. In terms of assembly, the complex is composed of two ATP-binding proteins (MetN), two transmembrane proteins (MetI) and a solute-binding protein (MetQ).

The protein resides in the cell inner membrane. It catalyses the reaction L-methionine(out) + ATP + H2O = L-methionine(in) + ADP + phosphate + H(+). It carries out the reaction D-methionine(out) + ATP + H2O = D-methionine(in) + ADP + phosphate + H(+). Its function is as follows. Part of the ABC transporter complex MetNIQ involved in methionine import. Responsible for energy coupling to the transport system. The protein is Methionine import ATP-binding protein MetN 1 of Burkholderia mallei (strain ATCC 23344).